The primary structure comprises 380 residues: Cytochrome b (380 aa).

A run of 4 helical transmembrane segments spans residues 34 to 54, 78 to 99, 114 to 134, and 179 to 199; these read FGSLLGICLMTQILTGLLLAM, WLIRNLHANGASFFFICIYLHI, WNTGVILLLTLMATAFVGYVL, and FFALHFLLPFMIAGLTLVHLT. Residues His-84 and His-98 each contribute to the heme b site. Residues His-183 and His-197 each contribute to the heme b site. Position 202 (His-202) interacts with a ubiquinone. The next 4 membrane-spanning stretches (helical) occupy residues 227–247, 289–309, 321–341, and 348–368; these read LKDILGFTLMFLLLTTLALFS, LGGVLALAASVLILFLAPFLH, LSQLLFWVLVANLFILTWVGS, and FIIIGQLASFTYFTILLILFP.

It belongs to the cytochrome b family. In terms of assembly, the cytochrome bc1 complex contains 11 subunits: 3 respiratory subunits (MT-CYB, CYC1 and UQCRFS1), 2 core proteins (UQCRC1 and UQCRC2) and 6 low-molecular weight proteins (UQCRH/QCR6, UQCRB/QCR7, UQCRQ/QCR8, UQCR10/QCR9, UQCR11/QCR10 and a cleavage product of UQCRFS1). This cytochrome bc1 complex then forms a dimer. Heme b is required as a cofactor.

Its subcellular location is the mitochondrion inner membrane. Functionally, component of the ubiquinol-cytochrome c reductase complex (complex III or cytochrome b-c1 complex) that is part of the mitochondrial respiratory chain. The b-c1 complex mediates electron transfer from ubiquinol to cytochrome c. Contributes to the generation of a proton gradient across the mitochondrial membrane that is then used for ATP synthesis. In Procellaria westlandica (Westland petrel), this protein is Cytochrome b (MT-CYB).